The primary structure comprises 264 residues: Thymidylate synthase (264 aa).

DUMP is bound at residue arginine 21. Residue histidine 51 participates in (6R)-5,10-methylene-5,6,7,8-tetrahydrofolate binding. 126-127 (RR) serves as a coordination point for dUMP. Catalysis depends on cysteine 146, which acts as the Nucleophile. DUMP-binding positions include 166-169 (RSCD), asparagine 177, and 207-209 (HLY). Aspartate 169 provides a ligand contact to (6R)-5,10-methylene-5,6,7,8-tetrahydrofolate. Alanine 263 serves as a coordination point for (6R)-5,10-methylene-5,6,7,8-tetrahydrofolate.

It belongs to the thymidylate synthase family. Bacterial-type ThyA subfamily. Homodimer.

The protein resides in the cytoplasm. It carries out the reaction dUMP + (6R)-5,10-methylene-5,6,7,8-tetrahydrofolate = 7,8-dihydrofolate + dTMP. It participates in pyrimidine metabolism; dTTP biosynthesis. In terms of biological role, catalyzes the reductive methylation of 2'-deoxyuridine-5'-monophosphate (dUMP) to 2'-deoxythymidine-5'-monophosphate (dTMP) while utilizing 5,10-methylenetetrahydrofolate (mTHF) as the methyl donor and reductant in the reaction, yielding dihydrofolate (DHF) as a by-product. This enzymatic reaction provides an intracellular de novo source of dTMP, an essential precursor for DNA biosynthesis. The sequence is that of Thymidylate synthase from Shigella boydii serotype 4 (strain Sb227).